The following is a 259-amino-acid chain: UPF0246 protein PSPA7_1607 (259 aa).

It belongs to the UPF0246 family.

This Pseudomonas paraeruginosa (strain DSM 24068 / PA7) (Pseudomonas aeruginosa (strain PA7)) protein is UPF0246 protein PSPA7_1607.